Consider the following 227-residue polypeptide: Putative molybdenum transport system permease protein YvgM (227 aa).

5 consecutive transmembrane segments (helical) span residues 17–37, 57–77, 94–114, 142–162, and 201–221; these read VVLS…LGTL, FMLP…VIFG, VIFT…PLMY, VFIH…SILS, and TLAW…LFFI. The 205-residue stretch at 17-221 folds into the ABC transmembrane type-1 domain; sequence VVLSFQVAAV…VISFLMLFFI (205 aa).

The protein belongs to the binding-protein-dependent transport system permease family. CysTW subfamily.

The protein localises to the cell membrane. Its function is as follows. could be part of the binding-protein-dependent transport system for molybdenum; probably responsible for the translocation of the substrate across the membrane. This chain is Putative molybdenum transport system permease protein YvgM (yvgM), found in Bacillus subtilis (strain 168).